A 233-amino-acid chain; its full sequence is Leucyl/phenylalanyl-tRNA--protein transferase (233 aa).

It belongs to the L/F-transferase family.

It is found in the cytoplasm. It catalyses the reaction N-terminal L-lysyl-[protein] + L-leucyl-tRNA(Leu) = N-terminal L-leucyl-L-lysyl-[protein] + tRNA(Leu) + H(+). The enzyme catalyses N-terminal L-arginyl-[protein] + L-leucyl-tRNA(Leu) = N-terminal L-leucyl-L-arginyl-[protein] + tRNA(Leu) + H(+). It carries out the reaction L-phenylalanyl-tRNA(Phe) + an N-terminal L-alpha-aminoacyl-[protein] = an N-terminal L-phenylalanyl-L-alpha-aminoacyl-[protein] + tRNA(Phe). Functionally, functions in the N-end rule pathway of protein degradation where it conjugates Leu, Phe and, less efficiently, Met from aminoacyl-tRNAs to the N-termini of proteins containing an N-terminal arginine or lysine. This Laribacter hongkongensis (strain HLHK9) protein is Leucyl/phenylalanyl-tRNA--protein transferase.